A 303-amino-acid polypeptide reads, in one-letter code: ATP synthase gamma chain (303 aa).

Belongs to the ATPase gamma chain family. As to quaternary structure, F-type ATPases have 2 components, CF(1) - the catalytic core - and CF(0) - the membrane proton channel. CF(1) has five subunits: alpha(3), beta(3), gamma(1), delta(1), epsilon(1). CF(0) has three main subunits: a, b and c.

The protein localises to the cell inner membrane. Produces ATP from ADP in the presence of a proton gradient across the membrane. The gamma chain is believed to be important in regulating ATPase activity and the flow of protons through the CF(0) complex. In Bartonella henselae (strain ATCC 49882 / DSM 28221 / CCUG 30454 / Houston 1) (Rochalimaea henselae), this protein is ATP synthase gamma chain.